The following is a 327-amino-acid chain: F-box/LRR-repeat protein At3g58900 (327 aa).

The region spanning 1–47 is the F-box domain; it reads MDLFSSLPNELLYHILSFLSTKEAALTSVLSKRWRNLFAFVPYLEFD. LRR repeat units lie at residues 116–144, 161–192, 199–230, 235–261, and 277–308; these read DLFIDFRDLYSLPHEVGVSRTLVVLRVGS, KTLVLDSCWLCIGQFQILLLACPALEELDMTN, NVTVSSSILKELTIDLHGCCSVVNLKSLSFDA, YFYYCDSLAEDYPQVNLKNLVEAQINL, and EMLVADDVFPGLGNAWKLITGLRNVQQLYLSP.

The polypeptide is F-box/LRR-repeat protein At3g58900 (Arabidopsis thaliana (Mouse-ear cress)).